We begin with the raw amino-acid sequence, 396 residues long: E3 ubiquitin-protein transferase MAEA (396 aa).

Residues 1–124 are extracellular and involved in cell to cell contact; it reads MAVQESAAQL…AAASMWKRKR (124 aa). T28 carries the post-translational modification Phosphothreonine. The LisH domain maps to 121 to 153; sequence KRKRMDRMMVEHLLRCGYYNTAVKLARQSGIED. The region spanning 159–216 is the CTLH domain; it reads MFLTAKEVEESLERRETATCLAWCHDNKSRLRKMKSCLEFSLRIQEFIELVRQNKRLD. The segment at 314–381 adopts an RING-Gid-type zinc-finger fold; the sequence is CPVCSRSLNK…QDDKVVCPRT (68 aa).

In terms of assembly, identified in the CTLH complex that contains GID4, RANBP9 and/or RANBP10, MKLN1, MAEA, RMND5A (or alternatively its paralog RMND5B), GID8, ARMC8, WDR26 and YPEL5. Within this complex, MAEA, RMND5A (or alternatively its paralog RMND5B), GID8, WDR26, and RANBP9 and/or RANBP10 form the catalytic core, while GID4, MKLN1, ARMC8 and YPEL5 have ancillary roles. Interacts with F-actin. In terms of processing, autoubiquitinated as component of the CTLH E3 ubiquitin-protein ligase complex (in vitro). In terms of tissue distribution, detected in embryonic fibroblasts. Detected in macrophages. Detected in heart. liver, spleen and kidney (at protein level).

It localises to the cytoplasm. The protein resides in the nucleus. The protein localises to the nucleoplasm. It is found in the nucleus matrix. Its subcellular location is the cell membrane. It localises to the cytoskeleton. It catalyses the reaction S-ubiquitinyl-[E2 ubiquitin-conjugating enzyme]-L-cysteine + [acceptor protein]-L-lysine = [E2 ubiquitin-conjugating enzyme]-L-cysteine + N(6)-ubiquitinyl-[acceptor protein]-L-lysine.. In terms of biological role, core component of the CTLH E3 ubiquitin-protein ligase complex that selectively accepts ubiquitin from UBE2H and mediates ubiquitination and subsequent proteasomal degradation of the transcription factor HBP1. MAEA and RMND5A are both required for catalytic activity of the CTLH E3 ubiquitin-protein ligase complex. MAEA is required for normal cell proliferation. The CTLH E3 ubiquitin-protein ligase complex is not required for the degradation of enzymes involved in gluconeogenesis, such as FBP1. Plays a role in erythroblast enucleation during erythrocyte maturation and in the development of mature macrophages. Mediates the attachment of erythroid cell to mature macrophages; this MAEA-mediated contact inhibits erythroid cell apoptosis. Participates in erythroblastic island formation, which is the functional unit of definitive erythropoiesis. Associates with F-actin to regulate actin distribution in erythroblasts and macrophages. May contribute to nuclear architecture and cells division events. This chain is E3 ubiquitin-protein transferase MAEA (Maea), found in Mus musculus (Mouse).